We begin with the raw amino-acid sequence, 180 residues long: Progesterone receptor (180 aa).

Residues 1–11 (KNCPACRLRKC) form an NR C4-type zinc finger. Residues 1 to 16 (KNCPACRLRKCCQAGM) constitute a DNA-binding region (nuclear receptor). Phosphoserine is present on Ser60. In terms of domain architecture, NR LBD spans 63–180 (QEIQLFPPLI…QRMKESSFYS (118 aa)). The tract at residues 71 to 180 (LINLLLSIEP…QRMKESSFYS (110 aa)) is AF2; mediates transcriptional activation. Arg150 lines the progesterone pocket.

It belongs to the nuclear hormone receptor family. NR3 subfamily. In terms of assembly, interacts with SMARD1 and UNC45A. Interacts with CUEDC2; the interaction promotes ubiquitination, decreases sumoylation, and represses transcriptional activity. Interacts with PIAS3; the interaction promotes sumoylation of PR in a hormone-dependent manner, inhibits DNA-binding, and alters nuclear export. Interacts with SP1; the interaction requires ligand-induced phosphorylation by ERK1/2-MAPK. Interacts with PRMT2. Interacts with NCOA2 and NCOA1. Interacts with KLF9. Interacts with GTF2B. Phosphorylated on multiple serine sites. Several of these sites are hormone-dependent. In terms of processing, sumoylation is hormone-dependent and represses transcriptional activity. Sumoylation on all three sites is enhanced by PIAS3. Desumoylated by SENP1. Sumoylation is repressed by ubiquitination and modulated by phosphorylation. Post-translationally, ubiquitination is hormone-dependent and represses sumoylation. Palmitoylated by ZDHHC7 and ZDHHC21. Palmitoylation is required for plasma membrane targeting and for rapid intracellular signaling via ERK and AKT kinases and cAMP generation.

The protein resides in the nucleus. It localises to the cytoplasm. Its function is as follows. The steroid hormones and their receptors are involved in the regulation of eukaryotic gene expression and affect cellular proliferation and differentiation in target tissues. Transcriptional activator of several progesteron-dependent promoters in a variety of cell types. Involved in activation of SRC-dependent MAPK signaling on hormone stimulation. The polypeptide is Progesterone receptor (PGR) (Notamacropus eugenii (Tammar wallaby)).